The primary structure comprises 159 residues: Small ribosomal subunit protein uS9 (159 aa).

Belongs to the universal ribosomal protein uS9 family.

This Rickettsia rickettsii (strain Iowa) protein is Small ribosomal subunit protein uS9.